The primary structure comprises 246 residues: 4-hydroxy-tetrahydrodipicolinate reductase (246 aa).

NAD(+)-binding positions include 8–13, 75–77, and 99–102; these read GISGRM, GTT, and ASNY. Catalysis depends on His-132, which acts as the Proton donor/acceptor. (S)-2,3,4,5-tetrahydrodipicolinate is bound at residue His-133. Catalysis depends on Lys-136, which acts as the Proton donor. 142–143 is a binding site for (S)-2,3,4,5-tetrahydrodipicolinate; that stretch reads GT.

This sequence belongs to the DapB family.

It localises to the cytoplasm. The enzyme catalyses (S)-2,3,4,5-tetrahydrodipicolinate + NAD(+) + H2O = (2S,4S)-4-hydroxy-2,3,4,5-tetrahydrodipicolinate + NADH + H(+). It carries out the reaction (S)-2,3,4,5-tetrahydrodipicolinate + NADP(+) + H2O = (2S,4S)-4-hydroxy-2,3,4,5-tetrahydrodipicolinate + NADPH + H(+). It functions in the pathway amino-acid biosynthesis; L-lysine biosynthesis via DAP pathway; (S)-tetrahydrodipicolinate from L-aspartate: step 4/4. Functionally, catalyzes the conversion of 4-hydroxy-tetrahydrodipicolinate (HTPA) to tetrahydrodipicolinate. This is 4-hydroxy-tetrahydrodipicolinate reductase from Akkermansia muciniphila (strain ATCC BAA-835 / DSM 22959 / JCM 33894 / BCRC 81048 / CCUG 64013 / CIP 107961 / Muc).